The following is a 207-amino-acid chain: 3-hexulose-6-phosphate synthase (207 aa).

This sequence belongs to the HPS/KGPDC family. HPS subfamily.

It carries out the reaction D-ribulose 5-phosphate + formaldehyde = D-arabino-hex-3-ulose 6-phosphate. It participates in one-carbon metabolism; formaldehyde assimilation via RuMP pathway; D-fructose 6-phosphate from D-ribulose 5-phosphate and formaldehyde: step 1/2. Functionally, catalyzes the condensation of ribulose 5-phosphate with formaldehyde to form 3-hexulose 6-phosphate. This chain is 3-hexulose-6-phosphate synthase (rmpA), found in Mycobacterium gastri.